Consider the following 1829-residue polypeptide: Iron-regulated protein FrpC (1829 aa).

22 Hemolysin-type calcium-binding repeats span residues 869 to 886 (FGHNKNVSLYGNDGNDTL), 887 to 904 (IGGAGNDYLEGGSGSDTY), 1015 to 1032 (NGGLGDDYLYGADGDDLL), 1033 to 1050 (NGDAGNDSIYSGNGNDTL), 1051 to 1068 (NGGEGNDALYGYNGNDAL), 1069 to 1086 (NGGEGNDHLNGEDGNDTL), 1087 to 1104 (IGGAGNDYLEGGSGSDTY), 1215 to 1232 (NGGLGDDYLYGADGDDLL), 1233 to 1250 (NGDAGNDSIYSGNGNDTL), 1251 to 1268 (DGGEGNDALYGYNGNDAL), 1269 to 1286 (NGGEGNDHLNGEDGNDTL), 1287 to 1304 (IGGAGNDYLEGGSGSDTY), 1415 to 1432 (NGGLGDDYLYGADGDDLL), 1433 to 1450 (NGDAGNDSIYSGNGNDTL), 1451 to 1468 (DGGEGNDALYGYNGNDAL), 1469 to 1486 (NGGEGNDHLNGEDGNDTL), 1487 to 1504 (IGGAGNDYLEGGSGSDTY), 1615 to 1632 (NGGLGDDYLYGADGDDLL), 1633 to 1650 (NGDAGNDSIYSGNGNDTL), 1651 to 1668 (NGGEGNDALYGYNGNDVL), 1669 to 1686 (NGGEGNDHLNGEDGNDTL), and 1687 to 1704 (IGGAGNDYLEGGSGSDTY).

It belongs to the RTX prokaryotic toxin (TC 1.C.11) family.

The protein resides in the cell outer membrane. It localises to the secreted. In terms of biological role, may participate in the pathogenesis of meningococcal disease. This chain is Iron-regulated protein FrpC (frpC), found in Neisseria meningitidis serogroup C.